The following is a 192-amino-acid chain: Adenylate kinase (192 aa).

ATP is bound at residue 10 to 15 (GAGKGT). The NMP stretch occupies residues 30–59 (STGDMLREAIEKETEIGKQAKIFIESGALV). AMP is bound by residues Thr-31, Arg-36, 57–59 (ALV), 85–88 (GYPR), and Gln-92. Residues 126–142 (KRVEEVVAVGGKIRSDD) form an LID region. Position 127 (Arg-127) interacts with ATP. AMP contacts are provided by Arg-139 and Arg-150. Position 178 (Ala-178) interacts with ATP.

This sequence belongs to the adenylate kinase family. As to quaternary structure, monomer.

It localises to the cytoplasm. The catalysed reaction is AMP + ATP = 2 ADP. It participates in purine metabolism; AMP biosynthesis via salvage pathway; AMP from ADP: step 1/1. Its function is as follows. Catalyzes the reversible transfer of the terminal phosphate group between ATP and AMP. Plays an important role in cellular energy homeostasis and in adenine nucleotide metabolism. The polypeptide is Adenylate kinase (Bartonella bacilliformis (strain ATCC 35685 / KC583 / Herrer 020/F12,63)).